The primary structure comprises 85 residues: Growth factor (85 aa).

The signal sequence occupies residues 1-19 (MVPRDLVATLLCAMCIVQA). An EGF-like domain is found at 33–77 (RIKLCNDDYKNYCLNNGTCFTVALNNVSLNPFCACHINYVGSRCQ). Disulfide bonds link Cys37–Cys51, Cys45–Cys65, and Cys67–Cys76. Asn48 and Asn58 each carry an N-linked (GlcNAc...) asparagine; by host glycan.

It is found in the secreted. In terms of biological role, stimulates the growth of some tissues. The protein is Growth factor (MGF) of Oryctolagus cuniculus (Rabbit).